The following is a 685-amino-acid chain: Exocyst complex component 8 (685 aa).

The PH domain occupies 151–251 (YLVYNGDLTE…WLEILEQTKK (101 aa)). A compositionally biased stretch (basic and acidic residues) spans 254–263 (ALNEKQKQEE). The segment at 254–273 (ALNEKQKQEETTPQLPVVPE) is disordered.

The protein belongs to the EXO84 family. As to quaternary structure, the exocyst complex is composed of exoc1, exoc2, exoc3, exoc4, exoc5, exoc6, exoc7 and exoc8.

The protein localises to the cytoplasm. It is found in the perinuclear region. It localises to the cell projection. Its subcellular location is the growth cone. Component of the exocyst complex involved in the docking of exocytic vesicles with fusion sites on the plasma membrane. This is Exocyst complex component 8 (exoc8) from Xenopus laevis (African clawed frog).